Here is a 78-residue protein sequence, read N- to C-terminus: Probable [Fe-S]-dependent transcriptional repressor (78 aa).

Residues cysteine 56, cysteine 61, cysteine 64, and cysteine 70 each coordinate iron-sulfur cluster.

It belongs to the FeoC family.

Its function is as follows. May function as a transcriptional regulator that controls feoABC expression. The polypeptide is Probable [Fe-S]-dependent transcriptional repressor (Escherichia coli O17:K52:H18 (strain UMN026 / ExPEC)).